The chain runs to 259 residues: UPF0246 protein PSPTO_1244 (259 aa).

Belongs to the UPF0246 family.

The chain is UPF0246 protein PSPTO_1244 from Pseudomonas syringae pv. tomato (strain ATCC BAA-871 / DC3000).